The sequence spans 563 residues: Adenine deaminase (563 aa).

The protein belongs to the metallo-dependent hydrolases superfamily. Adenine deaminase family. It depends on Mn(2+) as a cofactor.

It carries out the reaction adenine + H2O + H(+) = hypoxanthine + NH4(+). This Lactiplantibacillus plantarum (strain ATCC BAA-793 / NCIMB 8826 / WCFS1) (Lactobacillus plantarum) protein is Adenine deaminase.